Consider the following 81-residue polypeptide: Protein RADIALIS-like 3 (81 aa).

Residues 7 to 62 enclose the SANT domain; sequence SSSASWTRKENKLFERALATYDQDTPDRWHNVARAVGGKSAEEVRRHYELLIRDVN.

Expressed just outside the vascular bundles in the rosette stem and the leaf traces. Not detected in floral primordia.

It localises to the nucleus. Probable transcription factor. The sequence is that of Protein RADIALIS-like 3 (RL3) from Arabidopsis thaliana (Mouse-ear cress).